We begin with the raw amino-acid sequence, 211 residues long: Methylthioribulose-1-phosphate dehydratase (211 aa).

Residues His-97 and His-99 each contribute to the Zn(2+) site.

It belongs to the aldolase class II family. MtnB subfamily. As to quaternary structure, homotetramer. Zn(2+) is required as a cofactor.

It catalyses the reaction 5-(methylsulfanyl)-D-ribulose 1-phosphate = 5-methylsulfanyl-2,3-dioxopentyl phosphate + H2O. It functions in the pathway amino-acid biosynthesis; L-methionine biosynthesis via salvage pathway; L-methionine from S-methyl-5-thio-alpha-D-ribose 1-phosphate: step 2/6. Its function is as follows. Catalyzes the dehydration of methylthioribulose-1-phosphate (MTRu-1-P) into 2,3-diketo-5-methylthiopentyl-1-phosphate (DK-MTP-1-P). The protein is Methylthioribulose-1-phosphate dehydratase of Geobacillus thermodenitrificans (strain NG80-2).